Consider the following 419-residue polypeptide: Phosphoribosylamine--glycine ligase (419 aa).

The 203-residue stretch at 109–311 folds into the ATP-grasp domain; the sequence is KQLLIEAGVP…LEKVLMACVE (203 aa). Residue 135-191 coordinates ATP; that stretch reads ATKMGAPIVVKADGLAAGKGVIVAQTSAEATTAIAELFDQGFEKIVVEEFLPGEEVS. Glu-281 and Asn-283 together coordinate Mg(2+).

Belongs to the GARS family. It depends on Mg(2+) as a cofactor. Mn(2+) is required as a cofactor.

It carries out the reaction 5-phospho-beta-D-ribosylamine + glycine + ATP = N(1)-(5-phospho-beta-D-ribosyl)glycinamide + ADP + phosphate + H(+). The protein operates within purine metabolism; IMP biosynthesis via de novo pathway; N(1)-(5-phospho-D-ribosyl)glycinamide from 5-phospho-alpha-D-ribose 1-diphosphate: step 2/2. This is Phosphoribosylamine--glycine ligase from Synechocystis sp. (strain ATCC 27184 / PCC 6803 / Kazusa).